We begin with the raw amino-acid sequence, 1283 residues long: 5-oxoprolinase PfmaA (1283 aa).

A disordered region spans residues 1256–1283; that stretch reads NTPGGGAWGKPEGDADGYREEDQAGDGI. The span at 1266–1277 shows a compositional bias: basic and acidic residues; the sequence is PEGDADGYREED.

This sequence belongs to the oxoprolinase family. As to quaternary structure, homodimer.

It carries out the reaction 5-oxo-L-proline + ATP + 2 H2O = L-glutamate + ADP + phosphate + H(+). In terms of biological role, 5-oxoprolinase; part of the gene cluster that mediates the biosynthesis of dihydroxynaphthalene (DHN)-melanin, a bluish-green pigment forming a dark layer in the conidial wall that protects the conidia from UV radiations. The first step of the pathway is the production of the pentaketide 1,3,6,8-tetrahydroxynaphthalene (1,3,6,8-THN or T4HN) by the polyketide synthase PfmaE though condensation of acetyl-CoA with malonyl-CoA. T4HN is not stable and easily oxidizes into the stable form flaviolin. T4HN is also substrate of the hydroxynaphthalene reductase PfmaG to yield scytalone. The scytalone dehydratase PfmaJ then reduces scytalone to 1,3,8-THN. 1,3,8-THN is then substrate of the hydroxynaphthalene reductase PfmaI to yield vermelone. Vermelone is further converted by the multicopper oxidase PfmaD to 1,8-DHN. Finally the laccase PFICI_06862 transforms 1,8-DHN to DHN-melanin. The roles of the 5-oxoprolinase PfmaA and the proline iminopeptidase PfmaB within the cluster have not been elucidated yet. The sequence is that of 5-oxoprolinase PfmaA from Pestalotiopsis fici (strain W106-1 / CGMCC3.15140).